The following is a 139-amino-acid chain: D-ribose pyranase (139 aa).

The active-site Proton donor is the histidine 20. Residues aspartate 28, histidine 106, and phenylalanine 128–asparagine 130 each bind substrate.

The protein belongs to the RbsD / FucU family. RbsD subfamily. As to quaternary structure, homodecamer.

It localises to the cytoplasm. It catalyses the reaction beta-D-ribopyranose = beta-D-ribofuranose. It participates in carbohydrate metabolism; D-ribose degradation; D-ribose 5-phosphate from beta-D-ribopyranose: step 1/2. In terms of biological role, catalyzes the interconversion of beta-pyran and beta-furan forms of D-ribose. The protein is D-ribose pyranase of Yersinia enterocolitica serotype O:8 / biotype 1B (strain NCTC 13174 / 8081).